The primary structure comprises 100 residues: Small ribosomal subunit protein uS14c (100 aa).

The segment covering 28–45 (KKEIKKVPSLSEKMEIHG) has biased composition (basic and acidic residues). The disordered stretch occupies residues 28-59 (KKEIKKVPSLSEKMEIHGKLQSPPRNSAPTRL).

It belongs to the universal ribosomal protein uS14 family. As to quaternary structure, part of the 30S ribosomal subunit.

It is found in the plastid. The protein resides in the chloroplast. In terms of biological role, binds 16S rRNA, required for the assembly of 30S particles. In Nandina domestica (Heavenly bamboo), this protein is Small ribosomal subunit protein uS14c.